We begin with the raw amino-acid sequence, 279 residues long: Indole-3-glycerol phosphate synthase (279 aa).

Belongs to the TrpC family.

The catalysed reaction is 1-(2-carboxyphenylamino)-1-deoxy-D-ribulose 5-phosphate + H(+) = (1S,2R)-1-C-(indol-3-yl)glycerol 3-phosphate + CO2 + H2O. It participates in amino-acid biosynthesis; L-tryptophan biosynthesis; L-tryptophan from chorismate: step 4/5. This is Indole-3-glycerol phosphate synthase from Ectopseudomonas mendocina (strain ymp) (Pseudomonas mendocina).